The chain runs to 317 residues: Melanocyte-stimulating hormone receptor (317 aa).

Topologically, residues 1 to 37 (MPVLGSQRRLLGSLNCTPPATFPLTLAPNRTGPQCLE) are extracellular. Asn-29 carries N-linked (GlcNAc...) asparagine glycosylation. A helical membrane pass occupies residues 38–63 (VSIPDGLFLSLGLVSLVENVLVVAAI). Residues 64–72 (AKNRNLHSP) are Cytoplasmic-facing. Residues 73–93 (MYYFICCLAMSDLLVSVSNVL) traverse the membrane as a helical segment. The Extracellular segment spans residues 94-118 (ETAVMLLLEAGALAAQAAVVQQLDN). Residues 119 to 140 (VIDVLICGSMVSSLCFLGAIAV) traverse the membrane as a helical segment. The Cytoplasmic portion of the chain corresponds to 141–163 (DRYISIFYALRYHSVVTLPRAWR). The helical transmembrane segment at 164–183 (IIAAIWVASILTSLLFITYY) threads the bilayer. The Extracellular portion of the chain corresponds to 184–191 (NHTVVLLC). A helical membrane pass occupies residues 192–211 (LVGFFIAMLALMAVLYVHML). Residues 212–240 (ARACQHARGIARLQKRQRPIHQGFGLKGA) lie on the Cytoplasmic side of the membrane. Residues 241 to 266 (ATLTILLGVFFLCWGPFFLHLSLIVL) traverse the membrane as a helical segment. At 267-279 (CPQHPTCGCIFKN) the chain is on the extracellular side. A helical membrane pass occupies residues 280-300 (FNLFLALIICNAIVDPLIYAF). Topologically, residues 301-317 (RSQELRKTLQEVLQCSW) are cytoplasmic. Cys-315 carries S-palmitoyl cysteine lipidation.

It belongs to the G-protein coupled receptor 1 family. Interacts with MGRN1, but does not undergo MGRN1-mediated ubiquitination; this interaction competes with GNAS-binding and thus inhibits agonist-induced cAMP production. Interacts with OPN3; the interaction results in a decrease in MC1R-mediated cAMP signaling and ultimately a decrease in melanin production in melanocytes.

It is found in the cell membrane. Its function is as follows. Receptor for MSH (alpha, beta and gamma) and ACTH. The activity of this receptor is mediated by G proteins which activate adenylate cyclase. Mediates melanogenesis, the production of eumelanin (black/brown) and phaeomelanin (red/yellow), via regulation of cAMP signaling in melanocytes. The sequence is that of Melanocyte-stimulating hormone receptor (MC1R) from Dama dama (Fallow deer).